We begin with the raw amino-acid sequence, 1234 residues long: DNA-directed RNA polymerase subunit beta (1234 aa).

Residues 1169 to 1234 form a disordered region; sequence ESVDEDADEL…LDLDDFGDEH (66 aa). Composition is skewed to acidic residues over residues 1171–1180 and 1191–1234; these read VDEDADELEV and EKEE…GDEH.

This sequence belongs to the RNA polymerase beta chain family. In terms of assembly, the RNAP catalytic core consists of 2 alpha, 1 beta, 1 beta' and 1 omega subunit. When a sigma factor is associated with the core the holoenzyme is formed, which can initiate transcription.

It carries out the reaction RNA(n) + a ribonucleoside 5'-triphosphate = RNA(n+1) + diphosphate. DNA-dependent RNA polymerase catalyzes the transcription of DNA into RNA using the four ribonucleoside triphosphates as substrates. The sequence is that of DNA-directed RNA polymerase subunit beta from Clostridium botulinum (strain Langeland / NCTC 10281 / Type F).